The sequence spans 499 residues: Putative alpha-galactosidase 8 (499 aa).

Asn-154 and Asn-191 each carry an N-linked (GlcNAc...) asparagine glycan. Asp-238 functions as the Nucleophile in the catalytic mechanism. A glycan (N-linked (GlcNAc...) asparagine) is linked at Asn-256. Asp-303 serves as the catalytic Proton donor.

It belongs to the glycosyl hydrolase 27 family.

The protein localises to the secreted. It catalyses the reaction Hydrolysis of terminal, non-reducing alpha-D-galactose residues in alpha-D-galactosides, including galactose oligosaccharides, galactomannans and galactolipids.. Functionally, putative alpha-galactosidase involved in the degradation of simple oligosaccharides like melibiose, raffinose and stachyose, and of polymeric galacto(gluco)mannans. The polypeptide is Putative alpha-galactosidase 8 (agl8) (Emericella nidulans (strain FGSC A4 / ATCC 38163 / CBS 112.46 / NRRL 194 / M139) (Aspergillus nidulans)).